The sequence spans 272 residues: Regulatory factor X-associated protein (272 aa).

Disordered regions lie at residues 1–20, 74–142, and 175–195; these read MEAQ…GVPH, LCEG…KTCT, and KKKK…GSAG. A compositionally biased stretch (acidic residues) spans 79-94; the sequence is GDGEEEAGEDEADLLD. The short motif at 163–178 is the Nuclear localization signal element; that stretch reads KKHRNKMYKDKYKKKK. Lysine 198 is covalently cross-linked (Glycyl lysine isopeptide (Lys-Gly) (interchain with G-Cter in SUMO2)). The segment at 214 to 270 is C-terminal domain; it reads TGSFGDRPARPTLLEQVLNQKRLSLLRSPEVVQFLQKQQQLLNQQVLEQRQQQFPGT.

As to quaternary structure, the RFX heterotetrameric complex consists of 2 molecules of RFX5 and one each of RFXAP and RFX-B/RFXANK; with each subunit representing a separate complementation group. RFX forms cooperative DNA binding complexes with X2BP and CBF/NF-Y. RFX associates with CIITA to form an active transcriptional complex. In terms of processing, phosphorylated. As to expression, ubiquitous.

Its subcellular location is the nucleus. In terms of biological role, part of the RFX complex that binds to the X-box of MHC II promoters. The sequence is that of Regulatory factor X-associated protein (RFXAP) from Homo sapiens (Human).